The sequence spans 219 residues: Large ribosomal subunit protein uL16 (219 aa).

The protein belongs to the universal ribosomal protein uL16 family. As to quaternary structure, component of the large ribosomal subunit. Mature ribosomes consist of a small (40S) and a large (60S) subunit. The 40S subunit contains about 33 different proteins and 1 molecule of RNA (18S). The 60S subunit contains about 49 different proteins and 3 molecules of RNA (28S, 5.8S and 5S).

This Bombyx mandarina (Wild silk moth) protein is Large ribosomal subunit protein uL16 (RpL10).